We begin with the raw amino-acid sequence, 473 residues long: GTPase Der (473 aa).

2 EngA-type G domains span residues 5–170 (PVVA…PEDV) and 178–351 (LKLA…ASSM). Residues 11–18 (GRPNVGKS), 58–62 (DTGGI), 123–126 (NKID), 184–191 (GRPNVGKS), 231–235 (DTAGV), and 296–299 (NKWD) each bind GTP. Residues 352–436 (FKVSTNRLTQ…PLKVEFKLNT (85 aa)) form the KH-like domain. Residues 438–473 (PYAGKKTTSSKKLRPGVSEARQKRRNMKYKKGSHKK) are disordered. A compositionally biased stretch (basic residues) spans 459 to 473 (QKRRNMKYKKGSHKK).

It belongs to the TRAFAC class TrmE-Era-EngA-EngB-Septin-like GTPase superfamily. EngA (Der) GTPase family. In terms of assembly, associates with the 50S ribosomal subunit.

Functionally, GTPase that plays an essential role in the late steps of ribosome biogenesis. The protein is GTPase Der of Psychrobacter sp. (strain PRwf-1).